A 186-amino-acid chain; its full sequence is MAKAVYVAEEVRVPEGVEVSIDGLKVTVKGPKGELTRDFSHARNIVIRLDEDEEGKKVVVEAYFANRRVKALVGTIAAHIENMITGVTKGFRYKLKIVYSHFPVTVKVQGDKVVIENFLGEKAPRIAKIMPGVTVKVQKDDVIVEGIDIEAVGQTAANIEQATKVKDKDRRVFIDGIYIYEKGVAE.

The protein belongs to the universal ribosomal protein uL6 family. As to quaternary structure, part of the 50S ribosomal subunit.

Its function is as follows. This protein binds to the 23S rRNA, and is important in its secondary structure. It is located near the subunit interface in the base of the L7/L12 stalk, and near the tRNA binding site of the peptidyltransferase center. The chain is Large ribosomal subunit protein uL6 from Hyperthermus butylicus (strain DSM 5456 / JCM 9403 / PLM1-5).